Here is a 635-residue protein sequence, read N- to C-terminus: MANDALSAIFSNPSRKGVQPSTSIVSYTNNEDDIIDVENGKFNKNKNINTNVYVDNSSIEESEVVPLPETKSIWSKIYYDFIVLDKTTLNVSLKESFLYNRDLKPVEEERRCWSWFNYLYFWLADCFNINTWQIAGTGLQLGLNWWQCWLTVWIGYTFAGIFVVLNSRFGSAYHLSFPITVRASFGIFFSMWPIINRVVMAIVWYAVQAWLGATPVALMLKSIFGKNLEDRIPNHFGSPNSTTFEFMCFFIFWVVSIPFVLVAPHKIRHLFTVKAALIPFAAFGFLIWALKKSHGKIELGTLNDYSPHGSEFSWIFVRSLMACVANFAALIINAPDFGRFAKNPQASLWPQLVAIPLFFAITCLIGIIVTAAGYHLYGVNYWSPLDVLGQFLETTYTRGTRAGVFLISFVFALAQLGTNISANSLACGADMTALFPRYINIRRGSLFCVAMALCICPWNLMASSSKFTSALGAYAIFLSSIAGVICADYFVVRRGYVKLTHLFLAQKGSFYMFGNKFGANWRAFVAYICGIAPNLPGFIGDVGAPKITVSEGAMRLYYLGYPVGFFISAVIYLILCYFFPVPGTPVTNFLTEKGWFQRWAYVEDFEQDWKNELRRDDLCDDTVSIYDGTEEKIVY.

At 1–144 (MANDALSAIF…AGTGLQLGLN (144 aa)) the chain is on the cytoplasmic side. The chain crosses the membrane as a helical span at residues 145–165 (WWQCWLTVWIGYTFAGIFVVL). The Extracellular segment spans residues 166-174 (NSRFGSAYH). Residues 175–195 (LSFPITVRASFGIFFSMWPII) traverse the membrane as a helical segment. The Cytoplasmic segment spans residues 196 to 198 (NRV). A helical transmembrane segment spans residues 199-219 (VMAIVWYAVQAWLGATPVALM). Topologically, residues 220–243 (LKSIFGKNLEDRIPNHFGSPNSTT) are extracellular. A helical membrane pass occupies residues 244–264 (FEFMCFFIFWVVSIPFVLVAP). Over 265 to 269 (HKIRH) the chain is Cytoplasmic. A helical membrane pass occupies residues 270 to 290 (LFTVKAALIPFAAFGFLIWAL). At 291 to 311 (KKSHGKIELGTLNDYSPHGSE) the chain is on the extracellular side. The helical transmembrane segment at 312-332 (FSWIFVRSLMACVANFAALII) threads the bilayer. Residues 333-351 (NAPDFGRFAKNPQASLWPQ) are Cytoplasmic-facing. The helical transmembrane segment at 352–372 (LVAIPLFFAITCLIGIIVTAA) threads the bilayer. At 373–401 (GYHLYGVNYWSPLDVLGQFLETTYTRGTR) the chain is on the extracellular side. Residues 402–422 (AGVFLISFVFALAQLGTNISA) form a helical membrane-spanning segment. Over 423-443 (NSLACGADMTALFPRYINIRR) the chain is Cytoplasmic. Residues 444–464 (GSLFCVAMALCICPWNLMASS) form a helical membrane-spanning segment. At 465 to 466 (SK) the chain is on the extracellular side. A helical transmembrane segment spans residues 467–487 (FTSALGAYAIFLSSIAGVICA). Residues 488–522 (DYFVVRRGYVKLTHLFLAQKGSFYMFGNKFGANWR) lie on the Cytoplasmic side of the membrane. A helical membrane pass occupies residues 523–543 (AFVAYICGIAPNLPGFIGDVG). The Extracellular portion of the chain corresponds to 544 to 560 (APKITVSEGAMRLYYLG). Residues 561-581 (YPVGFFISAVIYLILCYFFPV) form a helical membrane-spanning segment. Residues 582–635 (PGTPVTNFLTEKGWFQRWAYVEDFEQDWKNELRRDDLCDDTVSIYDGTEEKIVY) are Cytoplasmic-facing.

It belongs to the purine-cytosine permease (2.A.39) family.

It is found in the membrane. Functionally, transport of allantoin. The sequence is that of Allantoin permease (DAL4) from Saccharomyces cerevisiae (strain ATCC 204508 / S288c) (Baker's yeast).